Reading from the N-terminus, the 282-residue chain is tRNA pseudouridine synthase A (282 aa).

D53 functions as the Nucleophile in the catalytic mechanism. Y119 lines the substrate pocket.

This sequence belongs to the tRNA pseudouridine synthase TruA family. Homodimer.

It catalyses the reaction uridine(38/39/40) in tRNA = pseudouridine(38/39/40) in tRNA. In terms of biological role, formation of pseudouridine at positions 38, 39 and 40 in the anticodon stem and loop of transfer RNAs. This chain is tRNA pseudouridine synthase A, found in Corynebacterium efficiens (strain DSM 44549 / YS-314 / AJ 12310 / JCM 11189 / NBRC 100395).